The chain runs to 151 residues: Apolipoprotein A-I (151 aa).

The first 18 residues, 1–18, serve as a signal peptide directing secretion; it reads MKAVVLTLAVLFLTGSQA. Positions 19-24 are excised as a propeptide; the sequence is RHFWQQ. 2 tandem repeats follow at residues 67–88 and 89–110. The tract at residues 67-143 is 4 X approximate tandem repeats; sequence LKLLDNWDTL…EVELYRQKVA (77 aa). Met-109 carries the post-translational modification Methionine sulfoxide. One copy of the 3; half-length repeat lies at 111 to 121; it reads KDLEEVKQKVQ. Repeat 4 spans residues 122–143; that stretch reads PYLDDFQKKWQEEVELYRQKVA.

This sequence belongs to the apolipoprotein A1/A4/E family. Homodimer. Interacts with APOA1BP and CLU. Component of a sperm activating protein complex (SPAP), consisting of APOA1, an immunoglobulin heavy chain, an immunoglobulin light chain and albumin. Interacts with NDRG1. Interacts with SCGB3A2. Interacts with NAXE and YJEFN3. In terms of processing, glycosylated. Palmitoylated. Post-translationally, phosphorylation sites are present in the extracellular medium. Major protein of plasma HDL, also found in chylomicrons.

Its subcellular location is the secreted. In terms of biological role, participates in the reverse transport of cholesterol from tissues to the liver for excretion by promoting cholesterol efflux from tissues and by acting as a cofactor for the lecithin cholesterol acyltransferase (LCAT). As part of the SPAP complex, activates spermatozoa motility. The chain is Apolipoprotein A-I (APOA1) from Panthera tigris altaica (Siberian tiger).